The primary structure comprises 172 residues: Glutamyl-tRNA(Gln) amidotransferase subunit C-3, mitochondrial (172 aa).

A disordered region spans residues 49–71; the sequence is KHPSKVPQRPNKSTIDGQSTPTR. A compositionally biased stretch (polar residues) spans 58–71; the sequence is PNKSTIDGQSTPTR.

It belongs to the GatC family. In terms of assembly, subunit of the heterotrimeric GatCAB amidotransferase (AdT) complex, composed of A, B and C subunits.

The protein resides in the mitochondrion. It catalyses the reaction L-glutamyl-tRNA(Gln) + L-glutamine + ATP + H2O = L-glutaminyl-tRNA(Gln) + L-glutamate + ADP + phosphate + H(+). Allows the formation of correctly charged Gln-tRNA(Gln) through the transamidation of misacylated Glu-tRNA(Gln) in the mitochondria. The reaction takes place in the presence of glutamine and ATP through an activated gamma-phospho-Glu-tRNA(Gln). This is Glutamyl-tRNA(Gln) amidotransferase subunit C-3, mitochondrial from Culex quinquefasciatus (Southern house mosquito).